We begin with the raw amino-acid sequence, 228 residues long: Small ribosomal subunit protein uS3 (228 aa).

The 69-residue stretch at 39 to 107 folds into the KH type-2 domain; it reads TREYLQDKLK…PVHINIEEIR (69 aa).

The protein belongs to the universal ribosomal protein uS3 family. Part of the 30S ribosomal subunit. Forms a tight complex with proteins S10 and S14.

Binds the lower part of the 30S subunit head. Binds mRNA in the 70S ribosome, positioning it for translation. This chain is Small ribosomal subunit protein uS3, found in Pseudomonas putida (strain ATCC 700007 / DSM 6899 / JCM 31910 / BCRC 17059 / LMG 24140 / F1).